Consider the following 156-residue polypeptide: Snaclec A6 (156 aa).

Positions 1-23 (MGRSISVSFGLLVVFLSLSGTGA) are cleaved as a signal peptide. 3 disulfide bridges follow: Cys-27–Cys-38, Cys-55–Cys-154, and Cys-129–Cys-146. A C-type lectin domain is found at 34-155 (HEGHCYKVFN…CGKPYRFTCE (122 aa)).

This sequence belongs to the snaclec family. In terms of assembly, heterodimer; disulfide-linked. As to expression, expressed by the venom gland.

The protein resides in the secreted. Interferes with one step of hemostasis (modulation of platelet aggregation, or coagulation cascade, for example). This chain is Snaclec A6, found in Macrovipera lebetinus (Levantine viper).